The following is a 278-amino-acid chain: Tryptophan synthase alpha chain (278 aa).

Residues E50 and D61 each act as proton acceptor in the active site.

The protein belongs to the TrpA family. Tetramer of two alpha and two beta chains.

The enzyme catalyses (1S,2R)-1-C-(indol-3-yl)glycerol 3-phosphate + L-serine = D-glyceraldehyde 3-phosphate + L-tryptophan + H2O. Its pathway is amino-acid biosynthesis; L-tryptophan biosynthesis; L-tryptophan from chorismate: step 5/5. In terms of biological role, the alpha subunit is responsible for the aldol cleavage of indoleglycerol phosphate to indole and glyceraldehyde 3-phosphate. This Methylorubrum populi (strain ATCC BAA-705 / NCIMB 13946 / BJ001) (Methylobacterium populi) protein is Tryptophan synthase alpha chain.